We begin with the raw amino-acid sequence, 214 residues long: MSNEFLLNAESRSDTGKGASRRLRRLQERVPGILYGGEAEPQMISVELRELKKALENEAFYSHILTLKLDGADVQAVLRDMQRHPAKGHPLHVDLLRVDKTHKITMSVPLHFTNEESSIGVKKQGGEIQHNFAEVEVSCLPQHLPEFIEVDMANAELDSVVHLSDLKLPKGVELTQLALGEDHDQPVAAVHQPKVRASSDDDDAAEGEEAASEE.

Disordered regions lie at residues 1-23 and 182-214; these read MSNE…SRRL and DHDQ…ASEE. A compositionally biased stretch (acidic residues) spans 200–214; it reads DDDDAAEGEEAASEE.

The protein belongs to the bacterial ribosomal protein bL25 family. CTC subfamily. In terms of assembly, part of the 50S ribosomal subunit; part of the 5S rRNA/L5/L18/L25 subcomplex. Contacts the 5S rRNA. Binds to the 5S rRNA independently of L5 and L18.

Functionally, this is one of the proteins that binds to the 5S RNA in the ribosome where it forms part of the central protuberance. This Alcanivorax borkumensis (strain ATCC 700651 / DSM 11573 / NCIMB 13689 / SK2) protein is Large ribosomal subunit protein bL25.